We begin with the raw amino-acid sequence, 235 residues long: Segregation and condensation protein A (235 aa).

The protein belongs to the ScpA family. Component of a cohesin-like complex composed of ScpA, ScpB and the Smc homodimer, in which ScpA and ScpB bind to the head domain of Smc. The presence of the three proteins is required for the association of the complex with DNA.

Its subcellular location is the cytoplasm. Participates in chromosomal partition during cell division. May act via the formation of a condensin-like complex containing Smc and ScpB that pull DNA away from mid-cell into both cell halves. The sequence is that of Segregation and condensation protein A from Streptococcus equi subsp. zooepidemicus (strain H70).